Here is a 179-residue protein sequence, read N- to C-terminus: Large ribosomal subunit protein uL5 (179 aa).

Belongs to the universal ribosomal protein uL5 family. As to quaternary structure, part of the 50S ribosomal subunit; part of the 5S rRNA/L5/L18/L25 subcomplex. Contacts the 5S rRNA and the P site tRNA. Forms a bridge to the 30S subunit in the 70S ribosome.

In terms of biological role, this is one of the proteins that bind and probably mediate the attachment of the 5S RNA into the large ribosomal subunit, where it forms part of the central protuberance. In the 70S ribosome it contacts protein S13 of the 30S subunit (bridge B1b), connecting the 2 subunits; this bridge is implicated in subunit movement. Contacts the P site tRNA; the 5S rRNA and some of its associated proteins might help stabilize positioning of ribosome-bound tRNAs. The chain is Large ribosomal subunit protein uL5 from Rhodospirillum rubrum (strain ATCC 11170 / ATH 1.1.1 / DSM 467 / LMG 4362 / NCIMB 8255 / S1).